Reading from the N-terminus, the 384-residue chain is WAT1-related protein At4g08290 (384 aa).

The next 10 helical transmembrane spans lie at 15–35 (LLMI…MATL), 43–63 (VVIV…ALIF), 73–93 (LSVL…DQGF), 104–124 (TYTS…AWIL), 140–160 (IIGT…KGPL), 186–206 (WVVG…FYVL), 219–239 (SLSA…ALVV), 255–275 (FAPL…QGMV), 282–302 (VFVT…ASFI), and 307–327 (IHFG…MVVW). EamA domains follow at residues 25 to 154 (AGTY…LVMT) and 198 to 326 (VAWS…YMVV).

It belongs to the drug/metabolite transporter (DMT) superfamily. Plant drug/metabolite exporter (P-DME) (TC 2.A.7.4) family.

Its subcellular location is the membrane. The chain is WAT1-related protein At4g08290 from Arabidopsis thaliana (Mouse-ear cress).